The chain runs to 357 residues: Probable leucine aminopeptidase ARB_00576 (357 aa).

Residues 1–15 form the signal peptide; it reads MKVLAALALSALAMA. The N-linked (GlcNAc...) asparagine glycan is linked to asparagine 76. Zn(2+) contacts are provided by histidine 167 and aspartate 185. The segment at 169-188 is disordered; sequence DSINGNNPQGEAPGADDNGS. Residue asparagine 186 is glycosylated (N-linked (GlcNAc...) asparagine). Positions 224 and 251 each coordinate Zn(2+). A glycan (N-linked (GlcNAc...) asparagine) is linked at asparagine 269. An intrachain disulfide couples cysteine 291 to cysteine 295. Histidine 324 lines the Zn(2+) pocket.

This sequence belongs to the peptidase M28 family. M28E subfamily. Monomer. The cofactor is Zn(2+).

It localises to the secreted. In terms of biological role, probable extracellular aminopeptidase which contributes to pathogenicity. This is Probable leucine aminopeptidase ARB_00576 from Arthroderma benhamiae (strain ATCC MYA-4681 / CBS 112371) (Trichophyton mentagrophytes).